The primary structure comprises 362 residues: Chorismate synthase (362 aa).

2 residues coordinate NADP(+): R48 and R54. Residues R131–S133, N243–A244, G287, K302–S306, and R328 contribute to the FMN site.

This sequence belongs to the chorismate synthase family. In terms of assembly, homotetramer. FMNH2 is required as a cofactor.

It catalyses the reaction 5-O-(1-carboxyvinyl)-3-phosphoshikimate = chorismate + phosphate. It participates in metabolic intermediate biosynthesis; chorismate biosynthesis; chorismate from D-erythrose 4-phosphate and phosphoenolpyruvate: step 7/7. Its function is as follows. Catalyzes the anti-1,4-elimination of the C-3 phosphate and the C-6 proR hydrogen from 5-enolpyruvylshikimate-3-phosphate (EPSP) to yield chorismate, which is the branch point compound that serves as the starting substrate for the three terminal pathways of aromatic amino acid biosynthesis. This reaction introduces a second double bond into the aromatic ring system. This chain is Chorismate synthase, found in Rhodopseudomonas palustris (strain BisB18).